A 194-amino-acid chain; its full sequence is dTTP/UTP pyrophosphatase (194 aa).

Residue D73 is the Proton acceptor of the active site.

It belongs to the Maf family. YhdE subfamily. The cofactor is a divalent metal cation.

The protein localises to the cytoplasm. The catalysed reaction is dTTP + H2O = dTMP + diphosphate + H(+). It carries out the reaction UTP + H2O = UMP + diphosphate + H(+). In terms of biological role, nucleoside triphosphate pyrophosphatase that hydrolyzes dTTP and UTP. May have a dual role in cell division arrest and in preventing the incorporation of modified nucleotides into cellular nucleic acids. This is dTTP/UTP pyrophosphatase from Clostridium botulinum (strain Okra / Type B1).